Reading from the N-terminus, the 700-residue chain is MSQNQVPKWIQLNNEIMIQKDGKFQFDKDKEAVHSYFVDYINQNTVFFHNLKEKLDYLVENQYYEEEFLSLYSFEDIKEVFKTAYAKKFRFPSFMSAFKFYNDYALKTNDKKKILERYEDRISIVALFFANGDTEKAKEYVNLMINQEYQPSTPTFLNAGRKRRGELVSCFLLEVNDSLNDISRAIDISMQLSKLGGGVSLNLSKLRAKGEAIKDVENATKGVVGVMKLLDNAFRYADQMGQRQGSGAAYLNIFHRDINDFLDTKKISADEDVRVKTLSIGVVIPDKFVELAREDKAAYVFYPHTIYKEYGQHMDEMDMNEMYDKFVDNPRVKKEKINPRKLLEKLAMLRSESGYPYIMFQDNVNKVHANNHISKVKFSNLCSEVLQASQVSSYTDYDEEDEIGLDISCNLGSLNILNVMEHKSIEKTVKLATDSLTHVSETTDIRNAPAVRRANKAMKSIGLGAMNLHGYLAQNGIAYESPEARDFANTFFMMVNFYSIQRSAEIAKEKGETFDQYEGSTYATGEYFDKYVSTDFSPKYEKIANLFEGMHIPTTEDWKKLKAFVAEHGMYHSYRLCIAPTGSISYVQSSTASVMPIMERIEERTYGNSKTYYPMPGLASNNWFFYKEAYDMDMFKVVDMIATIQQHIDQGISFTLFLKDTMTTRDLNRIDLYAHHRGIKTIYYARTKDTGQDSCLSCVV.

Substrate is bound by residues T153, 169–170, G198, 380–384, and 580–584; these read SC, NLCSE, and PTGSI. C170 and C409 are disulfide-bonded. N380 (proton acceptor) is an active-site residue. C382 (cysteine radical intermediate) is an active-site residue. E384 functions as the Proton acceptor in the catalytic mechanism.

The protein belongs to the ribonucleoside diphosphate reductase large chain family. Tetramer of two alpha and two beta subunits.

It carries out the reaction a 2'-deoxyribonucleoside 5'-diphosphate + [thioredoxin]-disulfide + H2O = a ribonucleoside 5'-diphosphate + [thioredoxin]-dithiol. Under complex allosteric control mediated by deoxynucleoside triphosphates and ATP binding. The type of nucleotide bound at the specificity site determines substrate preference. It seems probable that ATP makes the enzyme reduce CDP and UDP, dGTP favors ADP reduction and dTTP favors GDP reduction. Functionally, provides the precursors necessary for DNA synthesis. Catalyzes the biosynthesis of deoxyribonucleotides from the corresponding ribonucleotides. This chain is Ribonucleoside-diphosphate reductase subunit alpha, found in Bacillus subtilis (strain 168).